Consider the following 588-residue polypeptide: Calicin (588 aa).

Residues 28-98 enclose the BTB domain; the sequence is WDMALTVDHH…FYSGKVVISE (71 aa). A BACK domain is found at 133-235; sequence CLRYLFLAEL…NAVSNKTLMF (103 aa). The residue at position 149 (S149) is a Phosphoserine. 6 Kelch repeats span residues 280-327, 328-375, 377-423, 425-475, 476-525, and 526-580; these read SVVI…AAGR, YIYI…TCGG, VYSV…TKGD, NLYI…SFHQ, DNIL…IGDS, and KVFV…LAKL.

In terms of assembly, interacts with CYLC1; the interaction may be relevant for proper acrosome attachment to the nuclear envelope.

The protein resides in the cytoplasm. It is found in the cytoskeleton. It localises to the perinuclear theca. The protein localises to the calyx. Its function is as follows. Required for both nuclear and acrosomal shaping during spermiogenesis. This chain is Calicin (Ccin), found in Rattus norvegicus (Rat).